A 402-amino-acid chain; its full sequence is 3-isopropylmalate dehydratase large subunit 2 (402 aa).

Cys-280, Cys-341, and Cys-344 together coordinate [4Fe-4S] cluster.

This sequence belongs to the aconitase/IPM isomerase family. LeuC type 2 subfamily. As to quaternary structure, heterodimer of LeuC and LeuD. [4Fe-4S] cluster serves as cofactor.

The enzyme catalyses (2R,3S)-3-isopropylmalate = (2S)-2-isopropylmalate. It functions in the pathway amino-acid biosynthesis; L-leucine biosynthesis; L-leucine from 3-methyl-2-oxobutanoate: step 2/4. Its function is as follows. Catalyzes the isomerization between 2-isopropylmalate and 3-isopropylmalate, via the formation of 2-isopropylmaleate. This is 3-isopropylmalate dehydratase large subunit 2 from Methanopyrus kandleri (strain AV19 / DSM 6324 / JCM 9639 / NBRC 100938).